The chain runs to 347 residues: Phosphoribosylformylglycinamidine cyclo-ligase (347 aa).

This sequence belongs to the AIR synthase family.

It localises to the cytoplasm. It catalyses the reaction 2-formamido-N(1)-(5-O-phospho-beta-D-ribosyl)acetamidine + ATP = 5-amino-1-(5-phospho-beta-D-ribosyl)imidazole + ADP + phosphate + H(+). It functions in the pathway purine metabolism; IMP biosynthesis via de novo pathway; 5-amino-1-(5-phospho-D-ribosyl)imidazole from N(2)-formyl-N(1)-(5-phospho-D-ribosyl)glycinamide: step 2/2. The protein is Phosphoribosylformylglycinamidine cyclo-ligase of Syntrophus aciditrophicus (strain SB).